A 684-amino-acid chain; its full sequence is Pre-mRNA-splicing factor CLF1 (684 aa).

HAT repeat units follow at residues 43 to 75 (DWQR…FEFD), 77 to 109 (KDIR…SEIK), 111 to 143 (KNIN…LEES), 145 to 176 (GNQG…FETR), 178 to 209 (LNFE…FEQT), 211 to 251 (GDIS…WEAS), 253 to 285 (GEYE…FEKK), 295 to 327 (IVIA…LVEE), 332 to 364 (QLTS…ICVR), 374 to 410 (NDLP…FEIR), 412 to 443 (NNLL…LEIR), 445 to 477 (KEFD…LEEN), 518 to 550 (AEYE…FEST), and 584 to 622 (ENKH…YEKV).

This sequence belongs to the crooked-neck family. Associated with the spliceosome.

The protein localises to the nucleus. Its function is as follows. Involved in pre-mRNA splicing and cell cycle progression. Required for the spliceosome assembly and initiation of the DNA replication. The polypeptide is Pre-mRNA-splicing factor CLF1 (CLF1) (Kluyveromyces lactis (strain ATCC 8585 / CBS 2359 / DSM 70799 / NBRC 1267 / NRRL Y-1140 / WM37) (Yeast)).